A 416-amino-acid chain; its full sequence is Phosphoglycerate kinase (416 aa).

The (2R)-3-phosphoglycerate site is built by V23, D24, F25, N26, Q38, R39, S62, H63, G65, R66, L121, R122, H168, and R169. Position 212 (G212) interacts with ADP. G212 provides a ligand contact to CDP. Residues A213 and K214 each coordinate AMP. A213 serves as a coordination point for ATP. Position 213 (A213) interacts with Mg(2+). Positions 216 and 217 each coordinate Mg(2+). A CDP-binding site is contributed by D217. K218 contributes to the AMP binding site. An ATP-binding site is contributed by K218. ADP is bound at residue G236. Residue G236 participates in CDP binding. G237 and G311 together coordinate AMP. The ATP site is built by G237 and G311. CDP contacts are provided by G336 and F341. F341 provides a ligand contact to ADP. Residue E342 participates in AMP binding. 3 residues coordinate ATP: E342, D373, and T374. Position 373 (D373) interacts with Mg(2+).

It belongs to the phosphoglycerate kinase family. In terms of assembly, monomer. It depends on Mg(2+) as a cofactor.

It is found in the cytoplasm. The protein localises to the mitochondrion. It catalyses the reaction (2R)-3-phosphoglycerate + ATP = (2R)-3-phospho-glyceroyl phosphate + ADP. It participates in carbohydrate degradation; glycolysis; pyruvate from D-glyceraldehyde 3-phosphate: step 2/5. In terms of biological role, catalyzes one of the two ATP producing reactions in the glycolytic pathway via the reversible conversion of 1,3-diphosphoglycerate to 3-phosphoglycerate. Both L- and D- forms of purine and pyrimidine nucleotides can be used as substrates, but the activity is much lower on pyrimidines. Negatively regulates the biosynthesis of acetyl-CoA from pyruvate in the mitochondrion. This chain is Phosphoglycerate kinase (PGK1), found in Eremothecium gossypii (strain ATCC 10895 / CBS 109.51 / FGSC 9923 / NRRL Y-1056) (Yeast).